The chain runs to 38 residues: Photosystem II reaction center protein L (38 aa).

Residues 17 to 37 (SLYWGLLLIFVLAILFSSYIF) form a helical membrane-spanning segment.

The protein belongs to the PsbL family. In terms of assembly, PSII is composed of 1 copy each of membrane proteins PsbA, PsbB, PsbC, PsbD, PsbE, PsbF, PsbH, PsbI, PsbJ, PsbK, PsbL, PsbM, PsbT, PsbX, PsbY, PsbZ, Psb30/Ycf12, at least 3 peripheral proteins of the oxygen-evolving complex and a large number of cofactors. It forms dimeric complexes.

It is found in the plastid. It localises to the chloroplast thylakoid membrane. Functionally, one of the components of the core complex of photosystem II (PSII). PSII is a light-driven water:plastoquinone oxidoreductase that uses light energy to abstract electrons from H(2)O, generating O(2) and a proton gradient subsequently used for ATP formation. It consists of a core antenna complex that captures photons, and an electron transfer chain that converts photonic excitation into a charge separation. This subunit is found at the monomer-monomer interface and is required for correct PSII assembly and/or dimerization. This is Photosystem II reaction center protein L from Nephroselmis olivacea (Green alga).